We begin with the raw amino-acid sequence, 265 residues long: Glutamate racemase (265 aa).

Substrate-binding positions include 12–13 (DS) and 44–45 (YG). The Proton donor/acceptor role is filled by Cys75. 76-77 (NT) lines the substrate pocket. The active-site Proton donor/acceptor is the Cys186. 187-188 (TH) serves as a coordination point for substrate.

It belongs to the aspartate/glutamate racemases family.

It catalyses the reaction L-glutamate = D-glutamate. The protein operates within cell wall biogenesis; peptidoglycan biosynthesis. Functionally, provides the (R)-glutamate required for cell wall biosynthesis. This is Glutamate racemase from Pseudomonas putida (strain GB-1).